A 110-amino-acid polypeptide reads, in one-letter code: Small ribosomal subunit protein eS25 (110 aa).

The tract at residues methionine 1–alanine 38 is disordered. Over residues lysine 14–alanine 38 the composition is skewed to basic and acidic residues.

Belongs to the eukaryotic ribosomal protein eS25 family.

The sequence is that of Small ribosomal subunit protein eS25 (rps25e) from Pyrobaculum aerophilum (strain ATCC 51768 / DSM 7523 / JCM 9630 / CIP 104966 / NBRC 100827 / IM2).